A 350-amino-acid polypeptide reads, in one-letter code: Secreted effector protein PipB2 (350 aa).

Pentapeptide repeat domains are found at residues 162–201 (ANLT…NLSG), 202–241 (TSLG…SLLG), 247–286 (CNCS…IMED), and 287–326 (AVLT…TLTH).

In terms of assembly, interacts with the host kinesin light chain (KLC), a subunit of the kinesin-1 motor complex.

It localises to the secreted. The protein resides in the host membrane. In terms of biological role, effector proteins function to alter host cell physiology and promote bacterial survival in host tissues. Involved in the reorganization of late endosome/lysosome (LE/Lys) compartments in mammalian cells. Necessary and sufficient to link kinesin-1 onto the Salmonella-containing vacuole (SCV) membrane. Required for centrifugal extension of lysosomal glycoprotein-rich membrane tubules, known as Salmonella-induced filaments (Sifs), away from the SCV and toward the cell periphery. Required for virulence, but not for intracellular survival and replication in phagocytic cells. In Salmonella choleraesuis (strain SC-B67), this protein is Secreted effector protein PipB2 (pipB2).